Consider the following 152-residue polypeptide: MFRGASAINLDTKGRIAIPVRYREPLQLEHQGRIVITVDIQSACLLLYPIHEWELIEAKLLKLSDTDKTQRSLKRMLLGYAHEVELDGNGRILLPPPLRQYANLDKRIMLVGQLNKFELWDEQAWLQQIDECQETIRSEELANNERLADFSL.

2 consecutive SpoVT-AbrB domains span residues 5–52 (ASAI…PIHE) and 81–124 (AHEV…DEQA).

The protein belongs to the MraZ family. In terms of assembly, forms oligomers.

It localises to the cytoplasm. The protein localises to the nucleoid. In Shewanella sp. (strain ANA-3), this protein is Transcriptional regulator MraZ.